The sequence spans 194 residues: Adenylate kinase isoenzyme 1 (194 aa).

19-24 (GSGKGT) lines the ATP pocket. The NMP stretch occupies residues 39–68 (STGDLLRAEVSSGSERGKKLQAIMEKGELV). AMP is bound by residues T40, R45, 66–68 (ELV), 95–98 (GYPR), and Q102. The segment at 132-142 (KRGETSGRVDD) is LID. Residue R133 participates in ATP binding. R139 and R150 together coordinate AMP. G178 serves as a coordination point for ATP.

This sequence belongs to the adenylate kinase family. AK1 subfamily. In terms of assembly, monomer. Mg(2+) is required as a cofactor. As to expression, skeletal muscle.

The protein localises to the cytoplasm. The enzyme catalyses a ribonucleoside 5'-phosphate + ATP = a ribonucleoside 5'-diphosphate + ADP. It catalyses the reaction AMP + ATP = 2 ADP. The catalysed reaction is dAMP + ATP = dADP + ADP. It carries out the reaction dATP + AMP = dADP + ADP. The enzyme catalyses dAMP + dATP = 2 dADP. It catalyses the reaction a 2'-deoxyribonucleoside 5'-diphosphate + ATP = a 2'-deoxyribonucleoside 5'-triphosphate + ADP. The catalysed reaction is a ribonucleoside 5'-diphosphate + ATP = a ribonucleoside 5'-triphosphate + ADP. It carries out the reaction CDP + GTP = CTP + GDP. The enzyme catalyses GDP + ATP = GTP + ADP. It catalyses the reaction UDP + ATP = UTP + ADP. The catalysed reaction is GTP + UDP = UTP + GDP. It carries out the reaction dTDP + GTP = dTTP + GDP. The enzyme catalyses dCDP + GTP = dCTP + GDP. It catalyses the reaction dGDP + ATP = dGTP + ADP. The catalysed reaction is dADP + GTP = dATP + GDP. It carries out the reaction thiamine diphosphate + ADP = thiamine triphosphate + AMP. In terms of biological role, catalyzes the reversible transfer of the terminal phosphate group between ATP and AMP. Also displays broad nucleoside diphosphate kinase activity. Plays an important role in cellular energy homeostasis and in adenine nucleotide metabolism. Also catalyzes at a very low rate the synthesis of thiamine triphosphate (ThTP) from thiamine diphosphate (ThDP) and ADP. The polypeptide is Adenylate kinase isoenzyme 1 (Gallus gallus (Chicken)).